We begin with the raw amino-acid sequence, 106 residues long: Small ribosomal subunit protein bS18 (106 aa).

Positions 1 to 22 (MSEETTVRPERTERSERPERPQ) are enriched in basic and acidic residues. The disordered stretch occupies residues 1–34 (MSEETTVRPERTERSERPERPQYRGNGPRKRRPF).

The protein belongs to the bacterial ribosomal protein bS18 family. As to quaternary structure, part of the 30S ribosomal subunit. Forms a tight heterodimer with protein bS6.

Binds as a heterodimer with protein bS6 to the central domain of the 16S rRNA, where it helps stabilize the platform of the 30S subunit. In Geobacter metallireducens (strain ATCC 53774 / DSM 7210 / GS-15), this protein is Small ribosomal subunit protein bS18.